The following is a 370-amino-acid chain: Phosphate acyltransferase (370 aa).

The segment at 349–370 (SAGRAGQDAPDEMAAPGRSEKR) is disordered.

It belongs to the PlsX family. Homodimer. Probably interacts with PlsY.

It localises to the cytoplasm. It carries out the reaction a fatty acyl-[ACP] + phosphate = an acyl phosphate + holo-[ACP]. It participates in lipid metabolism; phospholipid metabolism. Catalyzes the reversible formation of acyl-phosphate (acyl-PO(4)) from acyl-[acyl-carrier-protein] (acyl-ACP). This enzyme utilizes acyl-ACP as fatty acyl donor, but not acyl-CoA. In Cereibacter sphaeroides (strain ATCC 17023 / DSM 158 / JCM 6121 / CCUG 31486 / LMG 2827 / NBRC 12203 / NCIMB 8253 / ATH 2.4.1.) (Rhodobacter sphaeroides), this protein is Phosphate acyltransferase.